A 693-amino-acid chain; its full sequence is MAREYPLNKVRNFGIAAHIDAGKTTTTERILYYTGRTHKIGEVHEGAATMDWMEQEKERGITITSAATYCRWQDMQFNIIDTPGHVDFTAEVERSLRVLDGAVVVFDSGNGVEPQSETVWRQADKYGVPRIVFSNKMDKVGADFFMVVNDIEEKLGAKPIPVQIPIGAESSFQGIVDLVTMKAHIWSGEELGAKFDITDVPKELEEKAHAARSEMIELIADYSDDIMNNFMEGKESTAVQIKQAIRNATLQIKLIPVLCGTAFKNKGVQPMLDAVCDYLPSPLDRKAFKGINPVTSETDSREVDDKAPFSALAFKIQADPYIGKLTYLRVYSGTLESGSYVYNPIKDAKERISRIVRMHSNNREEVKSVNTGDIAAAVGLKNTGTGDTLCDEEKPILLESMDFPVPVIDVAIEPKSKADEEKLGIALNRLSEEDPTFRVRTNEETNQTIIAGMGELHLEILVDRMKREFNVQANVGRPQVAYRETIRKVQEAESKYIRQTGGRGQYGHVVLTVEPQDPGKGYEFVNKIVGGVIPREYIPAIDKGIKEAMTSGTLAGYPVADVKVVVIDGSFHEVDSSEMAFKIAGSMAFKDACRKASPVILEPIMKTEVIVPEEYMGDVIGDLNSRRGKIVSMESKNKVQHIKANVPLAEMFGYSTTLRSLTQGRGNYSMEPSHYEEVPSQIADKILERTTRG.

One can recognise a tr-type G domain in the interval 8–283; the sequence is NKVRNFGIAA…AVCDYLPSPL (276 aa). Residues 17–24, 81–85, and 135–138 each bind GTP; these read AHIDAGKT, DTPGH, and NKMD.

It belongs to the TRAFAC class translation factor GTPase superfamily. Classic translation factor GTPase family. EF-G/EF-2 subfamily.

It is found in the cytoplasm. In terms of biological role, catalyzes the GTP-dependent ribosomal translocation step during translation elongation. During this step, the ribosome changes from the pre-translocational (PRE) to the post-translocational (POST) state as the newly formed A-site-bound peptidyl-tRNA and P-site-bound deacylated tRNA move to the P and E sites, respectively. Catalyzes the coordinated movement of the two tRNA molecules, the mRNA and conformational changes in the ribosome. This chain is Elongation factor G, found in Endomicrobium trichonymphae.